Consider the following 161-residue polypeptide: Small ribosomal subunit protein bS6 (161 aa).

A disordered region spans residues 107–161 (KGDERERGFRGPKPAGRFESGRGGAGGARRGYDDREEFRARNEREDGRDTDGEAE). Residues 136 to 161 (RGYDDREEFRARNEREDGRDTDGEAE) show a composition bias toward basic and acidic residues.

Belongs to the bacterial ribosomal protein bS6 family.

In terms of biological role, binds together with bS18 to 16S ribosomal RNA. The chain is Small ribosomal subunit protein bS6 from Gluconacetobacter diazotrophicus (strain ATCC 49037 / DSM 5601 / CCUG 37298 / CIP 103539 / LMG 7603 / PAl5).